The sequence spans 1294 residues: Voltage-gated inwardly rectifying potassium channel KCNH2 (1294 aa).

Residues 1-377 (RKFIIANARV…RIHRWTILHY (377 aa)) lie on the Cytoplasmic side of the membrane. The region spanning 15 to 44 (VIYCNDGFCELCGYSRAEVMQRPCTCDFLH) is the PAS domain. The 53-residue stretch at 66–118 (RKVEIAFYRKDGSCFLCLVDVVPVKNEDGAVIMFILNFEVVMEKDMVGSPARD) folds into the PAC domain. The tract at residues 207–258 (LVAPGSPPSSVPGPPHTSPRAHSLNPDASGSSCSLARTRSRESCASVRRASS) is disordered. Over residues 211-223 (GSPPSSVPGPPHT) the composition is skewed to pro residues. Phosphoserine occurs at positions 212 and 216. A compositionally biased stretch (polar residues) spans 232 to 243 (PDASGSSCSLAR). Residues Ser257, Ser258, Ser294, and Ser325 each carry the phosphoserine modification. Residues 378–398 (SPFKAVWDWLILLLVIYTAVF) form a helical membrane-spanning segment. At 399–424 (TPYSAAFLLKEPEEDAQTADCGYACQ) the chain is on the extracellular side. Residues 425 to 445 (PLAVVDLIVDIMFIVDILINF) traverse the membrane as a helical segment. The Cytoplasmic segment spans residues 446 to 469 (RTTYVNANEEVVSHPGRIAVHYFK). A helical transmembrane segment spans residues 470–490 (GWFLIDMVAAIPFDLLIFGSG). Over 491-494 (SEEL) the chain is Extracellular. The chain crosses the membrane as a helical; Voltage-sensor span at residues 495–515 (IGLLKTARLLRLVRVARKLDR). Residues 516–521 (YSEYGA) lie on the Cytoplasmic side of the membrane. Residues 522–542 (AVLFLLMCTFALIAHWLACIW) traverse the membrane as a helical segment. At 543-585 (YAIGNMEQPDMNSRIGWLHNLGDQIGKPYNSSGLGGPSIKDKY) the chain is on the extracellular side. The segment at residues 586-606 (VTALYFTFSSLTSVGFGNVSP) is an intramembrane region (pore-forming). The Selectivity filter motif lies at 598–603 (SVGFGN). Residues 607-612 (NTNSEK) lie on the Extracellular side of the membrane. A helical transmembrane segment spans residues 613 to 633 (IFSICVMLIGSLMYASIFGNV). At 634–1294 (SAIIQRLYSG…IAHWLACIWY (661 aa)) the chain is on the cytoplasmic side. The interval 716–816 (PFRGATKGCL…IHRDDLLEVL (101 aa)) is cNMP-binding domain. The tract at residues 844–956 (GSPGSTELEG…LTEDGDKSDT (113 aa)) is disordered. A phosphoserine mark is found at Ser845 and Ser848. Residues 857–866 (RQRRRKLSFR) are compositionally biased toward basic residues. The segment covering 902-913 (GDSPSSGPSSPE) has biased composition (low complexity). Arg987 is modified (omega-N-methylarginine). Residues 1008 to 1035 (RGDVESRLDALQRQLNRLETRLSADMAT) are a coiled coil. Phosphoserine is present on Ser1110.

The protein belongs to the potassium channel family. H (Eag) (TC 1.A.1.20) subfamily. Kv11.1/KCNH2 sub-subfamily. The potassium channel is probably composed of a homo- or heterotetrameric complex of pore-forming alpha subunits that can associate with modulating beta subunits. Interacts with DNAJB12 and DNAJB14; chaperones DNAJB12 and DNAJB14 promote tetramerization. Heteromultimer with KCNH6/ERG2 and KCNH7/ERG3. Interacts with ALG10B. Forms a stable complex with KCNE1 or KCNE2, and that this heteromultimerization regulates Inward rectifier potassium channel activity. Interacts with CANX. The core-glycosylated, but not the fully glycosylated form interacts with RNF207. Interacts with NDFIP1 and NDFIP2; this interaction decreases the cell membrane expression by targeting KCNH2, through interaction with NEDD4L, for the degradation through the multivesicular bodies (MVBs)-lysosomal pathway. Phosphorylated on serine and threonine residues. Phosphorylation by PKA inhibits ion conduction. In terms of tissue distribution, highly expressed in heart and brain.

It localises to the cell membrane. It catalyses the reaction K(+)(in) = K(+)(out). Pore-forming (alpha) subunit of voltage-gated inwardly rectifying potassium channel. Characterized by unusual gating kinetics by producing relatively small outward currents during membrane depolarization and large inward currents during subsequent repolarization which reflect a rapid inactivation during depolarization and quick recovery from inactivation but slow deactivation (closing) during repolarization. Channel properties are modulated by cAMP and subunit assembly. Forms a stable complex with KCNE1 or KCNE2, and that this heteromultimerization regulates inward rectifier potassium channel activity. The sequence is that of Voltage-gated inwardly rectifying potassium channel KCNH2 from Cavia porcellus (Guinea pig).